The following is a 997-amino-acid chain: Translation initiation factor IF-2 (997 aa).

A disordered region spans residues Glu101–His406. Low complexity-rich tracts occupy residues Ala116–Pro185 and Ala195–Lys209. Residues Thr231–Ala242 are compositionally biased toward polar residues. Low complexity predominate over residues Ala256–Pro280. Residues Asp281–Glu292 are compositionally biased toward basic and acidic residues. A compositionally biased stretch (gly residues) spans Arg385 to Gly394. A tr-type G domain is found at Pro498–Glu665. A G1 region spans residues Gly507–Thr514. Gly507–Thr514 contacts GTP. The G2 stretch occupies residues Gly532–His536. Positions Asp553–Gly556 are G3. GTP-binding positions include Asp553–His557 and Asn607–Asp610. The segment at Asn607–Asp610 is G4. Residues Ser643–Lys645 form a G5 region.

It belongs to the TRAFAC class translation factor GTPase superfamily. Classic translation factor GTPase family. IF-2 subfamily.

Its subcellular location is the cytoplasm. In terms of biological role, one of the essential components for the initiation of protein synthesis. Protects formylmethionyl-tRNA from spontaneous hydrolysis and promotes its binding to the 30S ribosomal subunits. Also involved in the hydrolysis of GTP during the formation of the 70S ribosomal complex. This chain is Translation initiation factor IF-2, found in Bordetella pertussis (strain Tohama I / ATCC BAA-589 / NCTC 13251).